The sequence spans 1683 residues: E3 ubiquitin-protein ligase SHPRH (1683 aa).

The interval 1–43 (MSSRRKRAPPVRVDEEKRQQLHWNMHEDRRNEPIIISDDDEQP) is disordered. The span at 12 to 32 (RVDEEKRQQLHWNMHEDRRNE) shows a compositional bias: basic and acidic residues. Ser-266 is modified (phosphoserine). In terms of domain architecture, Helicase ATP-binding; first part spans 307–389 (YQREAVNWML…TVEVLALILT (83 aa)). 373 to 380 (DEMGLGKT) is a binding site for ATP. The 75-residue stretch at 438–512 (QCPPTRVMIL…GFSGTFTLGK (75 aa)) folds into the H15 domain. A disordered region spans residues 525–607 (KQAVGSPRKI…QGHCPATSDS (83 aa)). The segment covering 534–547 (IQKETRKSGNKDTD) has biased composition (basic and acidic residues). Basic residues predominate over residues 568–588 (KSRRNRSKLRKKLVPSTKKGK). Position 635 is a phosphoserine (Ser-635). Residues 658 to 709 (RFECICGELDQIDRKPRVQCLKCHLWQHAKCVNYDEKNLKIKPFYCPHCLVA) form a PHD-type zinc finger. Residues 710-868 (MEPVSTRATL…FGLVVFLGIE (159 aa)) form the Helicase ATP-binding; second part domain. The short motif at 819 to 822 (DEAQ) is the DEAQ box element. Residues 1432 to 1479 (CPICARQLGKQWAVLTCGHCFCNECISIIIEQYSVGSHRSSIKCAICR) form an RING-type zinc finger. In terms of domain architecture, Helicase C-terminal spans 1514–1672 (AVVRTLMKIQ…ASVLTVADLA (159 aa)).

It belongs to the SNF2/RAD54 helicase family. In terms of assembly, homodimer. Interacts with HLTF, PCNA, UBE2N and RAD18. In terms of tissue distribution, broadly expressed.

It carries out the reaction S-ubiquitinyl-[E2 ubiquitin-conjugating enzyme]-L-cysteine + [acceptor protein]-L-lysine = [E2 ubiquitin-conjugating enzyme]-L-cysteine + N(6)-ubiquitinyl-[acceptor protein]-L-lysine.. It participates in protein modification; protein ubiquitination. Its function is as follows. E3 ubiquitin-protein ligase involved in DNA repair. Upon genotoxic stress, accepts ubiquitin from the UBE2N-UBE2V2 E2 complex and transfers it to 'Lys-164' of PCNA which had been monoubiquitinated by UBE2A/B-RAD18, promoting the formation of non-canonical poly-ubiquitin chains linked through 'Lys-63'. In Homo sapiens (Human), this protein is E3 ubiquitin-protein ligase SHPRH (SHPRH).